A 210-amino-acid polypeptide reads, in one-letter code: Acyl-homoserine-lactone synthase (210 aa).

Belongs to the autoinducer synthase family.

It catalyses the reaction a fatty acyl-[ACP] + S-adenosyl-L-methionine = an N-acyl-L-homoserine lactone + S-methyl-5'-thioadenosine + holo-[ACP] + H(+). Its function is as follows. Required for the synthesis of OHHL (N-(3-oxohexanoyl)-L-homoserine lactone), an autoinducer molecule which binds to EsaR. OHHL is necessary for biosynthesis of EPS virulence factor (extracellular heteropolysaccharide) which plays a role in the development of Stewart's wilt on sweet corn. This chain is Acyl-homoserine-lactone synthase (esaI), found in Pantoea stewartii subsp. stewartii (Erwinia stewartii).